We begin with the raw amino-acid sequence, 67 residues long: Large ribosomal subunit protein uL29 (67 aa).

The protein belongs to the universal ribosomal protein uL29 family.

The sequence is that of Large ribosomal subunit protein uL29 from Sphingopyxis alaskensis (strain DSM 13593 / LMG 18877 / RB2256) (Sphingomonas alaskensis).